The sequence spans 190 residues: Ladderlectin (190 aa).

The signal sequence occupies residues 1–18 (MAMLTISLLLCAAVALNG). A C-type lectin domain is found at 60–179 (GSRCFMFVET…GNSFPSGVLQ (120 aa)). Residues Cys-153 and Cys-169 are joined by a disulfide bond.

Multimeric. Expressed in cells of the branchial epithelium, hepatic sinusoids, biliary epithelium, renal interstitium, skin, and sub-mucosal granular layer of the intestine. Highly expressed in caudal kidney. Moderately expressed in liver. Weakly expressed in gill, spleen, cranial kidney and skin. Isoform 1 is highly expressed in intestine. Isoform 2 is weakly expressed in intestine.

Its function is as follows. Lectin that binds sepharose in a calcium-dependent manner. In Oncorhynchus mykiss (Rainbow trout), this protein is Ladderlectin.